Reading from the N-terminus, the 255-residue chain is UPF0246 protein BVU_0413 (255 aa).

The protein belongs to the UPF0246 family.

This chain is UPF0246 protein BVU_0413, found in Phocaeicola vulgatus (strain ATCC 8482 / DSM 1447 / JCM 5826 / CCUG 4940 / NBRC 14291 / NCTC 11154) (Bacteroides vulgatus).